A 138-amino-acid polypeptide reads, in one-letter code: Ribosomal RNA large subunit methyltransferase H (138 aa).

S-adenosyl-L-methionine is bound by residues Gly-86 and 105-110 (LSPLTF).

This sequence belongs to the RNA methyltransferase RlmH family. Homodimer.

The protein resides in the cytoplasm. The enzyme catalyses pseudouridine(1915) in 23S rRNA + S-adenosyl-L-methionine = N(3)-methylpseudouridine(1915) in 23S rRNA + S-adenosyl-L-homocysteine + H(+). Functionally, specifically methylates the pseudouridine at position 1915 (m3Psi1915) in 23S rRNA. The polypeptide is Ribosomal RNA large subunit methyltransferase H (Prochlorococcus marinus (strain MIT 9215)).